A 212-amino-acid chain; its full sequence is Peptide methionine sulfoxide reductase MsrA (212 aa).

Positions 1–14 are enriched in polar residues; that stretch reads MSSIDKTQRITQSD. A disordered region spans residues 1–21; that stretch reads MSSIDKTQRITQSDALPGRST. The active site involves Cys52.

It belongs to the MsrA Met sulfoxide reductase family.

It carries out the reaction L-methionyl-[protein] + [thioredoxin]-disulfide + H2O = L-methionyl-(S)-S-oxide-[protein] + [thioredoxin]-dithiol. It catalyses the reaction [thioredoxin]-disulfide + L-methionine + H2O = L-methionine (S)-S-oxide + [thioredoxin]-dithiol. In terms of biological role, has an important function as a repair enzyme for proteins that have been inactivated by oxidation. Catalyzes the reversible oxidation-reduction of methionine sulfoxide in proteins to methionine. The chain is Peptide methionine sulfoxide reductase MsrA from Pectobacterium carotovorum subsp. carotovorum (strain PC1).